The following is a 731-amino-acid chain: Unconventional prefoldin RPB5 interactor-like protein (731 aa).

Coiled coils occupy residues 91–115 (RLKL…KLHT) and 143–176 (LAEH…LRKL). Polar residues predominate over residues 205–217 (PLKSTNESSPKSL). 3 disordered regions span residues 205–224 (PLKS…EEDE), 259–302 (MSGE…EEEV), and 370–396 (ASEE…TVSE). A coiled-coil region spans residues 220–258 (EEEDELWKKLEAEEQNEADELSSEAEESLKTTDNLVRQL). Acidic residues predominate over residues 285–300 (ISEDDGDDDDEGDQEE). Coiled coils occupy residues 357 to 379 (DDLQ…EVVE) and 452 to 477 (SIKT…VKEN). Composition is skewed to polar residues over residues 508 to 518 (GAIPSPSSDQS) and 575 to 599 (SQFS…TSND). Disordered regions lie at residues 508–527 (GAIP…KPSD), 567–682 (GSAY…DLRD), and 694–731 (VEKE…LNKT). Basic and acidic residues predominate over residues 611-621 (FYEKYEKDRAK). The segment covering 623-644 (SKSNSSEGDATDPESATKSILR) has biased composition (polar residues). Residues 661 to 673 (KKGRKVRNQKKKE) are compositionally biased toward basic residues. Residues 721–731 (RFKEQRALNKT) are compositionally biased toward basic and acidic residues.

Belongs to the RNA polymerase II subunit 5-mediating protein family. As to quaternary structure, interacts with serine/threonine-protein phosphatases flw/PP1beta9C and Pp1-87B with higher affinity for Pp1-87B.

The protein resides in the cytoplasm. It is found in the chromosome. It localises to the nucleus. Inhibits the activity of serine/threonine-protein phosphatases flw/PP1beta9C and Pp1-87B. Required for germ line cell viability and differentiation, normal transcriptional activity and maintenance of DNA integrity. In Drosophila melanogaster (Fruit fly), this protein is Unconventional prefoldin RPB5 interactor-like protein.